The chain runs to 705 residues: Elongation factor G (705 aa).

The region spanning histidine 7–leucine 287 is the tr-type G domain. Residues alanine 16–threonine 23, aspartate 84–histidine 88, and asparagine 138–aspartate 141 each bind GTP. Positions asparagine 291–lysine 312 are disordered. Residues glutamate 302–lysine 312 are compositionally biased toward basic and acidic residues.

The protein belongs to the TRAFAC class translation factor GTPase superfamily. Classic translation factor GTPase family. EF-G/EF-2 subfamily.

The protein localises to the cytoplasm. In terms of biological role, catalyzes the GTP-dependent ribosomal translocation step during translation elongation. During this step, the ribosome changes from the pre-translocational (PRE) to the post-translocational (POST) state as the newly formed A-site-bound peptidyl-tRNA and P-site-bound deacylated tRNA move to the P and E sites, respectively. Catalyzes the coordinated movement of the two tRNA molecules, the mRNA and conformational changes in the ribosome. The protein is Elongation factor G of Bacteroides fragilis (strain ATCC 25285 / DSM 2151 / CCUG 4856 / JCM 11019 / LMG 10263 / NCTC 9343 / Onslow / VPI 2553 / EN-2).